The chain runs to 505 residues: Glycerol kinase (505 aa).

Thr-17 contributes to the ADP binding site. Residues Thr-17, Thr-18, and Ser-19 each coordinate ATP. Sn-glycerol 3-phosphate is bound at residue Thr-17. Arg-21 serves as a coordination point for ADP. The sn-glycerol 3-phosphate site is built by Arg-87, Glu-88, Tyr-139, and Asp-250. Residues Arg-87, Glu-88, Tyr-139, Asp-250, and Gln-251 each contribute to the glycerol site. Thr-272 and Gly-315 together coordinate ADP. Thr-272, Gly-315, Gln-319, and Gly-416 together coordinate ATP. Gly-416 and Asn-420 together coordinate ADP.

It belongs to the FGGY kinase family.

It catalyses the reaction glycerol + ATP = sn-glycerol 3-phosphate + ADP + H(+). It participates in polyol metabolism; glycerol degradation via glycerol kinase pathway; sn-glycerol 3-phosphate from glycerol: step 1/1. Inhibited by fructose 1,6-bisphosphate (FBP). Its function is as follows. Key enzyme in the regulation of glycerol uptake and metabolism. Catalyzes the phosphorylation of glycerol to yield sn-glycerol 3-phosphate. The chain is Glycerol kinase from Azotobacter vinelandii (strain DJ / ATCC BAA-1303).